Here is a 382-residue protein sequence, read N- to C-terminus: Albumin (382 aa).

Albumin domains are found at residues 1–178 (KCRI…ILLE) and 179–377 (AALK…GLLQ). Cystine bridges form between cysteine 2–cysteine 48, cysteine 47–cysteine 55, cysteine 67–cysteine 81, cysteine 80–cysteine 91, cysteine 116–cysteine 161, cysteine 160–cysteine 169, cysteine 192–cysteine 238, cysteine 237–cysteine 248, cysteine 261–cysteine 277, cysteine 276–cysteine 287, cysteine 314–cysteine 359, and cysteine 358–cysteine 367. 2 residues coordinate Ca(2+): aspartate 51 and glutamate 54. Aspartate 51 is a binding site for Zn(2+).

It belongs to the ALB/AFP/VDB family. Plasma.

Its subcellular location is the secreted. Its function is as follows. Serum albumin, the main protein of plasma, has a good binding capacity for water, Ca(2+), Na(+), K(+), fatty acids, hormones, bilirubin and drugs. Its main function is the regulation of the colloidal osmotic pressure of blood. The chain is Albumin (ALB) from Aquarana catesbeiana (American bullfrog).